Consider the following 93-residue polypeptide: Small ribosomal subunit protein uS19 (93 aa).

It belongs to the universal ribosomal protein uS19 family.

Functionally, protein S19 forms a complex with S13 that binds strongly to the 16S ribosomal RNA. The sequence is that of Small ribosomal subunit protein uS19 (rpsS) from Thermus thermophilus (strain ATCC BAA-163 / DSM 7039 / HB27).